A 501-amino-acid polypeptide reads, in one-letter code: Dynein regulatory complex subunit 5 (501 aa).

Over residues 1 to 23 (MQDTVTTSALLDPSHSSVSTQDN) the composition is skewed to polar residues. Disordered regions lie at residues 1–56 (MQDT…HPRA) and 202–222 (LPAQLRPGDQSDSGSEGEMEE). The span at 24 to 34 (SSTGGHTSSTS) shows a compositional bias: low complexity. LRR repeat units lie at residues 308-321 (VLEELDLSQNLIGD), 335-355 (RLRVLNLANNQVRAPGAQSLA), 363-383 (NLISLNLRLNCIEDEGGQALA), 391-411 (CLTTLHLGGNELSEPTATLLS), and 419-439 (TLTSINLSCNHIGLDGGKQLL).

Belongs to the DRC5 family. Component of the nexin-dynein regulatory complex (N-DRC). Interacts with DRC1. Interacts with FBXL13/DRC6, DRC3 and DRC7.

The protein localises to the cell projection. The protein resides in the cilium. It localises to the flagellum. It is found in the cytoplasm. Its subcellular location is the cytoskeleton. The protein localises to the flagellum axoneme. Component of the nexin-dynein regulatory complex (N-DRC) a key regulator of ciliary/flagellar motility which maintains the alignment and integrity of the distal axoneme and regulates microtubule sliding in motile axonemes. May play a role in the assembly of N-DRC. May be required for sperm motility. In Homo sapiens (Human), this protein is Dynein regulatory complex subunit 5 (TCTE1).